A 252-amino-acid polypeptide reads, in one-letter code: MQICLMDETGATDGALSVLAARWGLEHDEDNPMALVLTPQHLELRKRDEPKLGGIFVDFVGGAMAHRRKFGGGRGEAVAKAVGIKGDYLPDVVDATAGLGRDAFVLASVGCRVRMLERNPVVAALLDDGLTRGYADADIGGWLQERLQLIHASSLTALTDITPRPQVVYLDPMFPHRQKSALVKKEMRVFQSLVGPDLDADGLLEPARQLATKRVVVKRPDYAPPLADVATPNAIVTKGHRFDIYAGTPLTE.

S-adenosyl-L-methionine is bound by residues 101–102 (RD), 117–118 (ER), 153–154 (SS), and aspartate 171.

Belongs to the methyltransferase superfamily. RsmJ family.

It is found in the cytoplasm. It carries out the reaction guanosine(1516) in 16S rRNA + S-adenosyl-L-methionine = N(2)-methylguanosine(1516) in 16S rRNA + S-adenosyl-L-homocysteine + H(+). Specifically methylates the guanosine in position 1516 of 16S rRNA. This chain is Ribosomal RNA small subunit methyltransferase J, found in Salmonella dublin (strain CT_02021853).